The primary structure comprises 520 residues: Bifunctional purine biosynthesis protein PurH (520 aa).

Positions 1 to 146 constitute an MGS-like domain; it reads MAPVALLSVS…KNHADVAVLT (146 aa).

Belongs to the PurH family.

It carries out the reaction (6R)-10-formyltetrahydrofolate + 5-amino-1-(5-phospho-beta-D-ribosyl)imidazole-4-carboxamide = 5-formamido-1-(5-phospho-D-ribosyl)imidazole-4-carboxamide + (6S)-5,6,7,8-tetrahydrofolate. It catalyses the reaction IMP + H2O = 5-formamido-1-(5-phospho-D-ribosyl)imidazole-4-carboxamide. It participates in purine metabolism; IMP biosynthesis via de novo pathway; 5-formamido-1-(5-phospho-D-ribosyl)imidazole-4-carboxamide from 5-amino-1-(5-phospho-D-ribosyl)imidazole-4-carboxamide (10-formyl THF route): step 1/1. Its pathway is purine metabolism; IMP biosynthesis via de novo pathway; IMP from 5-formamido-1-(5-phospho-D-ribosyl)imidazole-4-carboxamide: step 1/1. The polypeptide is Bifunctional purine biosynthesis protein PurH (Synechococcus sp. (strain CC9605)).